A 462-amino-acid polypeptide reads, in one-letter code: Sonic hedgehog protein (462 aa).

Residues 1-23 (MLLLARCLLLVLVSSLLVCSGLA) form the signal peptide. A lipid anchor (N-palmitoyl cysteine) is attached at Cys24. Positions 32 to 38 (KRRHPKK) match the Cardin-Weintraub motif. Residues Glu89, Glu90, Asp95, Thr125, Glu126, Asp129, and Asp131 each coordinate Ca(2+). 3 residues coordinate Zn(2+): His140, Asp147, and His182. Residue Gly197 is the site of Cholesterol glycine ester attachment. N-linked (GlcNAc...) asparagine glycosylation is present at Asn278. 2 disordered regions span residues 279-302 (DSATGEPEASSGSGPPSGGALGPR) and 395-414 (TDRGGDSGGGDRGGGGGRVA). Over residues 283–292 (GEPEASSGSG) the composition is skewed to low complexity. A compositionally biased stretch (gly residues) spans 400–412 (DSGGGDRGGGGGR).

The protein belongs to the hedgehog family. In terms of assembly, multimer. Interacts with HHATL/GUP1 which negatively regulates HHAT-mediated palmitoylation of the SHH N-terminus. Interacts with BOC and CDON. Interacts with HHIP. Interacts with DISP1 via its cholesterol anchor. Interacts with SCUBE2. Interacts with glypican GPC3. The C-terminal domain displays an autoproteolysis activity and a cholesterol transferase activity. Both activities result in the cleavage of the full-length protein and covalent attachment of a cholesterol moiety to the C-terminal of the newly generated N-terminal fragment (ShhN). Cholesterylation is required for the sonic hedgehog protein N-product targeting to lipid rafts and multimerization. ShhN is the active species in both local and long-range signaling, whereas the C-product (ShhC) is degraded in the endoplasmic reticulum. Post-translationally, N-palmitoylation by HHAT of ShhN is required for sonic hedgehog protein N-product multimerization and full activity. It is a prerequisite for the membrane-proximal positioning and the subsequent shedding of this N-terminal peptide. In terms of processing, the lipidated N- and C-terminal peptides of ShhNp can be cleaved (shedding). The N-terminal palmitoylated peptide is cleaved at the Cardin-Weintraub (CW) motif site. The cleavage reduced the interactions with heparan sulfate. The cleavage is enhanced by SCUBE2.

Its subcellular location is the endoplasmic reticulum membrane. It is found in the golgi apparatus membrane. The protein localises to the secreted. The protein resides in the cell membrane. It catalyses the reaction glycyl-L-cysteinyl-[protein] + cholesterol + H(+) = [protein]-C-terminal glycyl cholesterol ester + N-terminal L-cysteinyl-[protein]. The C-terminal part of the sonic hedgehog protein precursor displays an autoproteolysis and a cholesterol transferase activity. Both activities result in the cleavage of the full-length protein into two parts (ShhN and ShhC) followed by the covalent attachment of a cholesterol moiety to the C-terminal of the newly generated ShhN. Both activities occur in the endoplasmic reticulum. Once cleaved, ShhC is degraded in the endoplasmic reticulum. Functionally, the dually lipidated sonic hedgehog protein N-product (ShhNp) is a morphogen which is essential for a variety of patterning events during development. Induces ventral cell fate in the neural tube and somites. Involved in the patterning of the anterior-posterior axis of the developing limb bud. Essential for axon guidance. Binds to the patched (PTCH1) receptor, which functions in association with smoothened (SMO), to activate the transcription of target genes. In the absence of SHH, PTCH1 represses the constitutive signaling activity of SMO. The chain is Sonic hedgehog protein from Homo sapiens (Human).